A 233-amino-acid chain; its full sequence is Large ribosomal subunit protein uL1 (233 aa).

Belongs to the universal ribosomal protein uL1 family. As to quaternary structure, part of the 50S ribosomal subunit.

Binds directly to 23S rRNA. The L1 stalk is quite mobile in the ribosome, and is involved in E site tRNA release. Functionally, protein L1 is also a translational repressor protein, it controls the translation of the L11 operon by binding to its mRNA. In Aeromonas hydrophila subsp. hydrophila (strain ATCC 7966 / DSM 30187 / BCRC 13018 / CCUG 14551 / JCM 1027 / KCTC 2358 / NCIMB 9240 / NCTC 8049), this protein is Large ribosomal subunit protein uL1.